The following is a 1184-amino-acid chain: DNA-directed RNA polymerase subunit beta' (1184 aa).

4 residues coordinate Zn(2+): C60, C62, C75, and C78. 3 residues coordinate Mg(2+): D449, D451, and D453. Positions 794, 867, 874, and 877 each coordinate Zn(2+). The segment at N1165–N1184 is disordered.

The protein belongs to the RNA polymerase beta' chain family. The RNAP catalytic core consists of 2 alpha, 1 beta, 1 beta' and 1 omega subunit. When a sigma factor is associated with the core the holoenzyme is formed, which can initiate transcription. Mg(2+) is required as a cofactor. It depends on Zn(2+) as a cofactor.

It carries out the reaction RNA(n) + a ribonucleoside 5'-triphosphate = RNA(n+1) + diphosphate. DNA-dependent RNA polymerase catalyzes the transcription of DNA into RNA using the four ribonucleoside triphosphates as substrates. The protein is DNA-directed RNA polymerase subunit beta' of Thermoanaerobacter pseudethanolicus (strain ATCC 33223 / 39E) (Clostridium thermohydrosulfuricum).